Here is a 161-residue protein sequence, read N- to C-terminus: Zinc metalloproteinase/disintegrin (161 aa).

Residues Glu1 to His72 form the Peptidase M12B domain. His12 lines the Zn(2+) pocket. Residue Glu13 is part of the active site. Zn(2+) is bound by residues His16 and His22. Disulfide bonds link Cys27-Cys51 and Cys29-Cys34. Residues Leu73–Leu88 constitute a propeptide that is removed on maturation. A Disintegrin domain is found at Glu89–Ala161. 6 disulfide bridges follow: Cys94-Cys109, Cys96-Cys104, Cys103-Cys126, Cys117-Cys123, Cys122-Cys147, and Cys135-Cys154. The Cell attachment site motif lies at Arg139 to Asp141.

Belongs to the venom metalloproteinase (M12B) family. P-II subfamily. P-IIa sub-subfamily. Monomer. In terms of tissue distribution, expressed by the venom gland.

It localises to the secreted. Its function is as follows. Impairs hemostasis in the envenomed animal. In terms of biological role, disintegrin: inhibit platelet aggregation induced by ADP, thrombin, platelet-activating factor and collagen. Acts by inhibiting fibrinogen interaction with platelet receptors GPIIb/GPIIIa (ITGA2B/ITGB3). The sequence is that of Zinc metalloproteinase/disintegrin from Bothrops jararaca (Jararaca).